Consider the following 310-residue polypeptide: N-acetyl-gamma-glutamyl-phosphate reductase (310 aa).

C117 is an active-site residue.

This sequence belongs to the NAGSA dehydrogenase family. Type 2 subfamily.

The protein resides in the cytoplasm. It catalyses the reaction N-acetyl-L-glutamate 5-semialdehyde + phosphate + NADP(+) = N-acetyl-L-glutamyl 5-phosphate + NADPH + H(+). Its pathway is amino-acid biosynthesis; L-arginine biosynthesis; N(2)-acetyl-L-ornithine from L-glutamate: step 3/4. Its function is as follows. Catalyzes the NADPH-dependent reduction of N-acetyl-5-glutamyl phosphate to yield N-acetyl-L-glutamate 5-semialdehyde. This is N-acetyl-gamma-glutamyl-phosphate reductase from Allorhizobium ampelinum (strain ATCC BAA-846 / DSM 112012 / S4) (Agrobacterium vitis (strain S4)).